The primary structure comprises 506 residues: 2,3-bisphosphoglycerate-independent phosphoglycerate mutase (506 aa).

Residues D13 and S63 each coordinate Mn(2+). Catalysis depends on S63, which acts as the Phosphoserine intermediate. Residues H124, R153 to D154, R183, R189, R254 to R257, and K330 contribute to the substrate site. Residues D396, H400, D437, H438, and H456 each coordinate Mn(2+).

Belongs to the BPG-independent phosphoglycerate mutase family. Monomer. It depends on Mn(2+) as a cofactor.

It catalyses the reaction (2R)-2-phosphoglycerate = (2R)-3-phosphoglycerate. The protein operates within carbohydrate degradation; glycolysis; pyruvate from D-glyceraldehyde 3-phosphate: step 3/5. Functionally, catalyzes the interconversion of 2-phosphoglycerate and 3-phosphoglycerate. The sequence is that of 2,3-bisphosphoglycerate-independent phosphoglycerate mutase from Cereibacter sphaeroides (strain KD131 / KCTC 12085) (Rhodobacter sphaeroides).